A 161-amino-acid polypeptide reads, in one-letter code: Phosphopantetheine adenylyltransferase (161 aa).

Substrate is bound at residue threonine 10. ATP is bound by residues 10-11 (TF) and histidine 18. Positions 42, 74, and 88 each coordinate substrate. Residues 89–91 (GLR), glutamate 99, and 124–130 (NSFISST) each bind ATP.

This sequence belongs to the bacterial CoaD family. Homohexamer. It depends on Mg(2+) as a cofactor.

It localises to the cytoplasm. The enzyme catalyses (R)-4'-phosphopantetheine + ATP + H(+) = 3'-dephospho-CoA + diphosphate. Its pathway is cofactor biosynthesis; coenzyme A biosynthesis; CoA from (R)-pantothenate: step 4/5. Its function is as follows. Reversibly transfers an adenylyl group from ATP to 4'-phosphopantetheine, yielding dephospho-CoA (dPCoA) and pyrophosphate. This Photobacterium profundum (strain SS9) protein is Phosphopantetheine adenylyltransferase.